A 434-amino-acid chain; its full sequence is Trigger factor (434 aa).

The PPIase FKBP-type domain maps to 161 to 246 (EDRATIDFTG…LKKVEERELP (86 aa)).

The protein belongs to the FKBP-type PPIase family. Tig subfamily.

The protein localises to the cytoplasm. The catalysed reaction is [protein]-peptidylproline (omega=180) = [protein]-peptidylproline (omega=0). Functionally, involved in protein export. Acts as a chaperone by maintaining the newly synthesized protein in an open conformation. Functions as a peptidyl-prolyl cis-trans isomerase. In Pectobacterium atrosepticum (strain SCRI 1043 / ATCC BAA-672) (Erwinia carotovora subsp. atroseptica), this protein is Trigger factor.